The sequence spans 466 residues: Argininosuccinate lyase (466 aa).

This sequence belongs to the lyase 1 family. Argininosuccinate lyase subfamily.

It is found in the cytoplasm. The catalysed reaction is 2-(N(omega)-L-arginino)succinate = fumarate + L-arginine. It functions in the pathway amino-acid biosynthesis; L-arginine biosynthesis; L-arginine from L-ornithine and carbamoyl phosphate: step 3/3. The protein is Argininosuccinate lyase of Campylobacter concisus (strain 13826).